The following is a 291-amino-acid chain: 4-hydroxy-tetrahydrodipicolinate synthase (291 aa).

T45 serves as a coordination point for pyruvate. Y133 acts as the Proton donor/acceptor in catalysis. K161 functions as the Schiff-base intermediate with substrate in the catalytic mechanism. I203 is a pyruvate binding site.

This sequence belongs to the DapA family. Homotetramer; dimer of dimers.

The protein localises to the cytoplasm. The enzyme catalyses L-aspartate 4-semialdehyde + pyruvate = (2S,4S)-4-hydroxy-2,3,4,5-tetrahydrodipicolinate + H2O + H(+). The protein operates within amino-acid biosynthesis; L-lysine biosynthesis via DAP pathway; (S)-tetrahydrodipicolinate from L-aspartate: step 3/4. Functionally, catalyzes the condensation of (S)-aspartate-beta-semialdehyde [(S)-ASA] and pyruvate to 4-hydroxy-tetrahydrodipicolinate (HTPA). In Neisseria gonorrhoeae (strain ATCC 700825 / FA 1090), this protein is 4-hydroxy-tetrahydrodipicolinate synthase.